The chain runs to 1407 residues: E3 ubiquitin-protein ligase linker protein MMS1 (1407 aa).

The interval 1–600 (MLGLRTHGLD…QFQIFRHLRI (600 aa)) is required for interaction with MMS22. Threonine 1294 carries the phosphothreonine modification.

Component of multiple cullin-RING ligases (CRLs) composed of 4 subunits: the RING protein HRT1, the cullin RTT101, a linker protein MMS1, and one of many alternative substrate receptors belonging to a protein family described as DCAF (DDB1- and CUL4-associated factor). Component of a RTT101(MMS1-MMS22) complex with the substrate receptor MMS22. This complex further interacts with RTT107 and CTF4 to form RTT101-MMS1-MMS22-RTT107 and RTT101-MMS1-MMS22-CTF4 complexes respectively. Component of a RTT101(MSS1-CRT10) complex with the substrate receptor CRT10. Component of a RTT101(MSS1-ESC2) complex with the potential substrate receptor ESC2. Component of a RTT101(MSS1-ORC5) complex with the potential substrate receptor ORC5. Interacts with RTT101 (via N-ter). Interacts (via N-ter) with MMS22 (via C-ter). Interacts with CRT10.

It localises to the nucleus. Functionally, component of multiple cullin-RING-based E3 ubiquitin-protein ligase complexes (CRLs), which mediate the ubiquitination of target proteins. The CRL associates with CDC34 as the E2 ubiquitin-conjugating enzyme. The functional specificity of the CRL depends on the type of the associated substrate receptor protein. RTT101(MMS1-MMS22) promotes fork progression through damaged DNA or natural pause sites by stabilizing replication proteins like the replication fork-pausing complex (FPC) and leading-strand polymerase at stalled replication forks. RTT101(MMS1-MMS22) ubiquitinates the acetylated histones H3K56ac-H4 at lysine residues H3K121, H3K122 and H3K125. Ubiquitination is required for efficient histone deposition during replication-coupled nucleosome assembly, probably by facilitating the transfer of H3-H4 from ASF1 to other chaperones involved in histone deposition. RTT101(MMS1-CRT10) may regulate nucleotide synthesis through transcriptional regulation of ribonucleotide reductase. RTT101(MMS1) is also involved in the non-functional rRNA decay (NRD) of 25S rRNA through the selective, ubiquitination-dependent degradation of nonfunctional ribosomal particles. Involved in the regulation of TY1 transposition. The sequence is that of E3 ubiquitin-protein ligase linker protein MMS1 (MMS1) from Saccharomyces cerevisiae (strain ATCC 204508 / S288c) (Baker's yeast).